Reading from the N-terminus, the 459-residue chain is Bifunctional protein GlmU (459 aa).

A pyrophosphorylase region spans residues 1 to 228 (MNFKAIILAA…IEELMGVNSR (228 aa)). UDP-N-acetyl-alpha-D-glucosamine is bound by residues 8-11 (LAAG), lysine 22, glutamine 72, and 77-78 (GT). Aspartate 101 lines the Mg(2+) pocket. Positions 138, 153, 168, and 226 each coordinate UDP-N-acetyl-alpha-D-glucosamine. A Mg(2+)-binding site is contributed by asparagine 226. Residues 229 to 249 (VELSKAEEIMRRRINESHMVN) form a linker region. The segment at 250–459 (GVTIIDTNST…KKNQKDDQSK (210 aa)) is N-acetyltransferase. UDP-N-acetyl-alpha-D-glucosamine is bound by residues arginine 331 and lysine 349. Histidine 361 serves as the catalytic Proton acceptor. UDP-N-acetyl-alpha-D-glucosamine contacts are provided by tyrosine 364 and asparagine 375. Acetyl-CoA contacts are provided by residues 384–385 (NY), serine 403, threonine 421, and arginine 438.

It in the N-terminal section; belongs to the N-acetylglucosamine-1-phosphate uridyltransferase family. The protein in the C-terminal section; belongs to the transferase hexapeptide repeat family. Homotrimer. The cofactor is Mg(2+).

It is found in the cytoplasm. The catalysed reaction is alpha-D-glucosamine 1-phosphate + acetyl-CoA = N-acetyl-alpha-D-glucosamine 1-phosphate + CoA + H(+). It catalyses the reaction N-acetyl-alpha-D-glucosamine 1-phosphate + UTP + H(+) = UDP-N-acetyl-alpha-D-glucosamine + diphosphate. The protein operates within nucleotide-sugar biosynthesis; UDP-N-acetyl-alpha-D-glucosamine biosynthesis; N-acetyl-alpha-D-glucosamine 1-phosphate from alpha-D-glucosamine 6-phosphate (route II): step 2/2. It participates in nucleotide-sugar biosynthesis; UDP-N-acetyl-alpha-D-glucosamine biosynthesis; UDP-N-acetyl-alpha-D-glucosamine from N-acetyl-alpha-D-glucosamine 1-phosphate: step 1/1. Its pathway is bacterial outer membrane biogenesis; LPS lipid A biosynthesis. Its function is as follows. Catalyzes the last two sequential reactions in the de novo biosynthetic pathway for UDP-N-acetylglucosamine (UDP-GlcNAc). The C-terminal domain catalyzes the transfer of acetyl group from acetyl coenzyme A to glucosamine-1-phosphate (GlcN-1-P) to produce N-acetylglucosamine-1-phosphate (GlcNAc-1-P), which is converted into UDP-GlcNAc by the transfer of uridine 5-monophosphate (from uridine 5-triphosphate), a reaction catalyzed by the N-terminal domain. This Clostridioides difficile (strain 630) (Peptoclostridium difficile) protein is Bifunctional protein GlmU.